Consider the following 481-residue polypeptide: Vanillin dehydrogenase (481 aa).

Position 228–233 (228–233 (GSTHVG)) interacts with NAD(+). Catalysis depends on residues Glu250 and Cys284.

The protein belongs to the aldehyde dehydrogenase family.

It catalyses the reaction vanillin + NAD(+) + H2O = vanillate + NADH + 2 H(+). Catalyzes the NAD-dependent oxidation of vanillin to vanillic acid. The chain is Vanillin dehydrogenase (vdh) from Pseudomonas sp. (strain HR199 / DSM 7063).